The primary structure comprises 115 residues: Vespryn (115 aa).

Residues 1–15 (MTWLLLCLLAQYENG) form the signal peptide. In terms of domain architecture, B30.2/SPRY spans 22–115 (SSSAKPYKTS…VKRKDHLRLT (94 aa)).

The protein belongs to the ohanin/vespryn family. Expressed by the venom gland.

It is found in the secreted. Functionally, neurotoxin that produces dose-dependent hypolocomotion and hyperalgesia in mice. May directly act on the central nervous system, as it is 6500-fold more potent when administered intracerebroventricularly than intraperitoneal. The protein is Vespryn of Pogona barbata (Bearded dragon).